A 104-amino-acid polypeptide reads, in one-letter code: Large ribosomal subunit protein bL21 (104 aa).

This sequence belongs to the bacterial ribosomal protein bL21 family. Part of the 50S ribosomal subunit. Contacts protein L20.

This protein binds to 23S rRNA in the presence of protein L20. This Agrobacterium fabrum (strain C58 / ATCC 33970) (Agrobacterium tumefaciens (strain C58)) protein is Large ribosomal subunit protein bL21.